The chain runs to 365 residues: Peptide chain release factor 2 (365 aa).

Glutamine 251 is modified (N5-methylglutamine).

It belongs to the prokaryotic/mitochondrial release factor family. Methylated by PrmC. Methylation increases the termination efficiency of RF2.

It localises to the cytoplasm. Peptide chain release factor 2 directs the termination of translation in response to the peptide chain termination codons UGA and UAA. The protein is Peptide chain release factor 2 of Aliarcobacter butzleri (strain RM4018) (Arcobacter butzleri).